We begin with the raw amino-acid sequence, 65 residues long: Neuropeptide-like protein 28 (65 aa).

Residues 1-22 form the signal peptide; sequence MISTSSILILVFLLACFMATSA. Tyrosine amide occurs at positions 29, 39, 47, and 55. A Tryptophan amide modification is found at Trp-63.

Belongs to the YARP (YGGW-amide related peptide) family.

The protein resides in the secreted. Functionally, may have antimicrobial activity. The sequence is that of Neuropeptide-like protein 28 (nlp-28) from Caenorhabditis elegans.